A 394-amino-acid polypeptide reads, in one-letter code: Elongation factor Tu (394 aa).

The tr-type G domain occupies 10–204 (KPHVNVGTIG…ALDTYIPEPE (195 aa)). Residues 19-26 (GHVDHGKT) form a G1 region. 19–26 (GHVDHGKT) contacts GTP. Position 26 (Thr26) interacts with Mg(2+). Residues 60-64 (GITIN) form a G2 region. Residues 81–84 (DCPG) are G3. GTP is bound by residues 81–85 (DCPGH) and 136–139 (NKCD). A G4 region spans residues 136–139 (NKCD). The tract at residues 174 to 176 (SAL) is G5.

Belongs to the TRAFAC class translation factor GTPase superfamily. Classic translation factor GTPase family. EF-Tu/EF-1A subfamily. Monomer.

The protein localises to the cytoplasm. The catalysed reaction is GTP + H2O = GDP + phosphate + H(+). In terms of biological role, GTP hydrolase that promotes the GTP-dependent binding of aminoacyl-tRNA to the A-site of ribosomes during protein biosynthesis. The polypeptide is Elongation factor Tu (Shewanella pealeana (strain ATCC 700345 / ANG-SQ1)).